The sequence spans 152 residues: Endoribonuclease YbeY (152 aa).

Zn(2+)-binding residues include His113, His117, and His123.

This sequence belongs to the endoribonuclease YbeY family. Zn(2+) serves as cofactor.

The protein resides in the cytoplasm. Functionally, single strand-specific metallo-endoribonuclease involved in late-stage 70S ribosome quality control and in maturation of the 3' terminus of the 16S rRNA. The protein is Endoribonuclease YbeY of Delftia acidovorans (strain DSM 14801 / SPH-1).